Here is a 173-residue protein sequence, read N- to C-terminus: Adenine phosphoribosyltransferase (173 aa).

This sequence belongs to the purine/pyrimidine phosphoribosyltransferase family. Homodimer.

It is found in the cytoplasm. It carries out the reaction AMP + diphosphate = 5-phospho-alpha-D-ribose 1-diphosphate + adenine. It functions in the pathway purine metabolism; AMP biosynthesis via salvage pathway; AMP from adenine: step 1/1. In terms of biological role, catalyzes a salvage reaction resulting in the formation of AMP, that is energically less costly than de novo synthesis. The sequence is that of Adenine phosphoribosyltransferase from Solibacter usitatus (strain Ellin6076).